A 102-amino-acid polypeptide reads, in one-letter code: Citrate lyase acyl carrier protein (102 aa).

At Ser-14 the chain carries O-(phosphoribosyl dephospho-coenzyme A)serine.

It belongs to the CitD family. Oligomer with a subunit composition of (alpha,beta,gamma)6.

It is found in the cytoplasm. Its function is as follows. Covalent carrier of the coenzyme of citrate lyase. The sequence is that of Citrate lyase acyl carrier protein from Streptococcus equi subsp. zooepidemicus (strain H70).